The primary structure comprises 146 residues: Large ribosomal subunit protein bL17 (146 aa).

A disordered region spans residues 118 to 146 (RDPAAKGQDSGPKPEVASDEDEAGEAAAA). Positions 134–146 (ASDEDEAGEAAAA) are enriched in acidic residues.

It belongs to the bacterial ribosomal protein bL17 family. As to quaternary structure, part of the 50S ribosomal subunit. Contacts protein L32.

In Acidiphilium cryptum (strain JF-5), this protein is Large ribosomal subunit protein bL17.